The primary structure comprises 1081 residues: MESAGLEQLLRELLLPDTERIRRATEQLQIVLRAPAALPALCDLLASAADPQIRQFAAVLTRRRLNTRWRRLAAEQRESLKSLILTALQRETEHCVSLSLAQLSATIFRKEGLEAWPQLLQLLQHSTHSPHSPEREMGLLLLSVVVTSRPEAFQPHHRELLRLLNETLGEVGSPGLLFYSLRTLTTMAPYLSTEDVPLARMLVPKLIMAMQTLIPIDEAKACEALEALDELLESEVPVITPYLSEVLTFCLEVARNVALGNAIRIRILCCLTFLVKVKSKALLKNRLLPPLLHTLFPIVAAEPPPGQLDPEDQDSEEEELEIELMGETPKHFAVQVVDMLALHLPPEKLCPQLMPMLEEALRSESPYQRKAGLLVLAVLSDGAGDHIRQRLLPPLLQIVCKGLEDPSQVVRNAALFALGQFSENLQPHISSYSREVMPLLLAYLKSVPLGHTHHLAKACYALENFVENLGPKVQPYLPELMECMLQLLRNPSSPRAKELAVSALGAIATAAQASLLPYFPAIMEHLREFLLTGREDLQPVQIQSLETLGVLARAVGEPMRPLAEECCQLGLGLCDQVDDPDLRRCTYSLFAALSGLMGEGLAPHLEQITTLMLLSLRSTEGIVPQYDGSSSFLLFDDESDGEEEEELMDEDVEEEDDSEISGYSVENAFFDEKEDTCAAVGEISVNTSVAFLPYMESVFEEVFKLLECPHLNVRKAAHEALGQFCCALHKACQSCPSEPNTAALQAALARVVPSYMQAVNRERERQVVMAVLEALTGVLRSCGTLTLKPPGRLAELCGVLKAVLQRKTACQDTDEEEEEEDDDQAEYDAMLLEHAGEAIPALAAAAGGDSFAPFFAGFLPLLVCKTKQGCTVAEKSFAVGTLAETIQGLGAASAQFVSRLLPVLLSTAQEADPEVRSNAIFGMGVLAEHGGHPAQEHFPKLLGLLFPLLARERHDRVRDNICGALARLLMASPTRKPEPQVLAALLHALPLKEDLEEWVTIGRLFSFLYQSSPDQVIDVAPELLRICSLILADNKIPPDTKAALLLLLTFLAKQHTDSFQAALGSLPVDKAQELQAVLGLS.

M1 carries the N-acetylmethionine modification. The Importin N-terminal domain maps to 24 to 90 (ATEQLQIVLR…KSLILTALQR (67 aa)). HEAT repeat units follow at residues 348–385 (KLCP…GAGD), 390–427 (RLLP…NLQP), 431–471 (SYSR…NLGP), 475–513 (PYLP…AAQA), 895–932 (QFVS…HGGH), and 936–974 (EHFP…ASPT).

This sequence belongs to the importin beta family. As to quaternary structure, found in a cytosolic complex with ASF1 (ASF1A or ASF1B) and histones H3 and H4.

It localises to the cytoplasm. It is found in the nucleus. Nuclear transport receptor that mediates nuclear import of proteins, such as histones, RPS3A, TNP2 and VDR. Serves as receptor for nuclear localization signals (NLS) in cargo substrates. Is thought to mediate docking of the importin/substrate complex to the nuclear pore complex (NPC) through binding to nucleoporin and the complex is subsequently translocated through the pore by an energy requiring, Ran-dependent mechanism. At the nucleoplasmic side of the NPC, Ran binds to the importin, the importin/substrate complex dissociates and importin is re-exported from the nucleus to the cytoplasm where GTP hydrolysis releases Ran. The directionality of nuclear import is thought to be conferred by an asymmetric distribution of the GTP- and GDP-bound forms of Ran between the cytoplasm and nucleus. Mediates the nuclear import of the histone H3-H4 dimer when in complex with ASF1 (ASF1A or ASF1B). Mediates the ligand-independent nuclear import of vitamin D receptor (VDR). In vitro, mediates the nuclear import of human cytomegalovirus UL84 by recognizing a non-classical NLS. This chain is Importin-4 (IPO4), found in Homo sapiens (Human).